The primary structure comprises 373 residues: Chloroperoxidase (373 aa).

The signal sequence occupies residues 1 to 20 (MFSKVLPFVGAVAALPHSVR). At glutamine 21 the chain carries Pyrrolidone carboxylic acid. Residue asparagine 33 is glycosylated (N-linked (GlcNAc...) asparagine). Cysteine 50 contacts heme. Cysteine 100 and cysteine 108 are joined by a disulfide. N-linked (GlcNAc...) asparagine glycosylation occurs at asparagine 114. Positions 125, 126, and 129 each coordinate Mn(2+). Residue glutamate 204 is part of the active site. N-linked (GlcNAc...) asparagine glycosylation occurs at asparagine 237. Residue threonine 259 is glycosylated (O-linked (Man) threonine). O-linked (Man) serine glycans are attached at residues serine 260, serine 262, serine 263, and serine 269. O-linked (Man) threonine glycosylation occurs at threonine 271. O-linked (Man) serine glycosylation is present at serine 272. O-linked (Man) threonine glycosylation is present at threonine 273. O-linked (Man...) threonine glycosylation is found at threonine 296, threonine 304, and threonine 314. Residues 322-373 (EAAPAATTSMAVFKNPYLEAIGTQDIKNQQAYVSSKAAAMASAMAANKARNL) constitute a propeptide that is removed on maturation.

It belongs to the chloroperoxidase family. Heme b is required as a cofactor. Mn(2+) serves as cofactor. In terms of processing, N- and O-glycosylated.

The enzyme catalyses RH + Cl(-) + H2O2 = RCl + 2 H2O.. Functionally, catalyzes peroxidative halogenations involved in the biosynthesis of clardariomycin (2,2-dichloro-1,3-cyclo-pentenedione). The enzyme also has potent catalase activity and in the absence of halide ion, acts as a peroxidase similar to plant peroxidases. This is Chloroperoxidase (CPO) from Leptoxyphium fumago (Caldariomyces fumago).